Here is a 501-residue protein sequence, read N- to C-terminus: Cytochrome P450 3A6 (501 aa).

Cys-440 contacts heme.

The protein belongs to the cytochrome P450 family. It depends on heme as a cofactor.

The protein localises to the endoplasmic reticulum membrane. It localises to the microsome membrane. The enzyme catalyses an organic molecule + reduced [NADPH--hemoprotein reductase] + O2 = an alcohol + oxidized [NADPH--hemoprotein reductase] + H2O + H(+). Exhibits progesterone 6 beta-hydroxylase activity. The polypeptide is Cytochrome P450 3A6 (CYP3A6) (Oryctolagus cuniculus (Rabbit)).